Reading from the N-terminus, the 192-residue chain is Mediator of RNA polymerase II transcription subunit 29 (192 aa).

Residues 32–51 (MQQQSPQQMQPAPVPQQTQQ) form a disordered region.

It belongs to the Mediator complex subunit 29 family. Component of the Mediator complex.

The protein localises to the nucleus. Its function is as follows. Component of the Mediator complex, a coactivator involved in the regulated transcription of nearly all RNA polymerase II-dependent genes. Mediator functions as a bridge to convey information from gene-specific regulatory proteins to the basal RNA polymerase II transcription machinery. Mediator is recruited to promoters by direct interactions with regulatory proteins and serves as a scaffold for the assembly of a functional preinitiation complex with RNA polymerase II and the general transcription factors. The polypeptide is Mediator of RNA polymerase II transcription subunit 29 (ix) (Bombyx mori (Silk moth)).